Here is a 343-residue protein sequence, read N- to C-terminus: Sulfate/thiosulfate import ATP-binding protein CysA (343 aa).

An ABC transporter domain is found at 3 to 233 (ILIENISKTF…PATPFVMGFM (231 aa)). 35 to 42 (GPSGSGKS) serves as a coordination point for ATP.

It belongs to the ABC transporter superfamily. Sulfate/tungstate importer (TC 3.A.1.6) family.

The protein localises to the plastid. The protein resides in the chloroplast. The catalysed reaction is sulfate(out) + ATP + H2O = sulfate(in) + ADP + phosphate + H(+). It catalyses the reaction thiosulfate(out) + ATP + H2O = thiosulfate(in) + ADP + phosphate + H(+). Functionally, part of the ABC transporter complex involved in sulfate/thiosulfate import. Responsible for energy coupling to the transport system. The polypeptide is Sulfate/thiosulfate import ATP-binding protein CysA (Nephroselmis olivacea (Green alga)).